A 1728-amino-acid chain; its full sequence is Hybrid PKS-NRPS synthetase TAS1 (1728 aa).

The interval 153 to 499 (SPLSKAQMAL…MDPTLLDFKV (347 aa)) is condensation (C) domain. Positions 608–1002 (KARAASQPDL…KLHIQGRIGN (395 aa)) are adenylation (A) domain. Positions 1141–1219 (MLRRHLTAEV…KQVDCLMGIV (79 aa)) constitute a Carrier domain. Ser-1177 carries the O-(pantetheine 4'-phosphoryl)serine modification. Positions 1225-1256 (LGSEPTGGSSSRSQSRRSAETSSSSTSAPSSV) are disordered. Low complexity-rich tracts occupy residues 1226 to 1237 (GSEPTGGSSSRS) and 1244 to 1255 (ETSSSSTSAPSS). Positions 1262-1714 (RNLYAIVGIS…SDATWFVIST (453 aa)) constitute a Ketosynthase family 3 (KS3) domain. Active-site for beta-ketoacyl synthase activity residues include Cys-1436, His-1579, and Asn-1633.

In the N-terminal section; belongs to the NRP synthetase family. Pantetheine 4'-phosphate is required as a cofactor.

The enzyme catalyses acetoacetyl-CoA + L-isoleucine + ATP = tenuazonic acid + AMP + diphosphate + CoA + 2 H(+). In terms of biological role, hybrid PKS-NRPS synthetase that mediates the biosynthesis of the toxin tenuazonic acid (TeA), an inhibitor of protein biosynthesis on ribosomes by suppressing the release of new protein. TAS1 alone is sufficient for TeA synthesis via the condensation of isoleucine (Ile) with acetoacetyl-CoA by the N-terminal NRPS module and subsequent cyclization conducted by the C-terminal KS domain. This is Hybrid PKS-NRPS synthetase TAS1 from Pyricularia oryzae (strain 70-15 / ATCC MYA-4617 / FGSC 8958) (Rice blast fungus).